The sequence spans 348 residues: Protein RecA (348 aa).

64 to 71 (GPESSGKT) is a binding site for ATP. Positions 324–335 (EYEIDGSNKEPL) are enriched in basic and acidic residues. The disordered stretch occupies residues 324–348 (EYEIDGSNKEPLAETEETLSLLDDE). The span at 336 to 348 (AETEETLSLLDDE) shows a compositional bias: acidic residues.

The protein belongs to the RecA family.

Its subcellular location is the cytoplasm. Can catalyze the hydrolysis of ATP in the presence of single-stranded DNA, the ATP-dependent uptake of single-stranded DNA by duplex DNA, and the ATP-dependent hybridization of homologous single-stranded DNAs. It interacts with LexA causing its activation and leading to its autocatalytic cleavage. The chain is Protein RecA from Listeria ivanovii.